The sequence spans 236 residues: tRNA1(Val) (adenine(37)-N6)-methyltransferase (236 aa).

It belongs to the methyltransferase superfamily. tRNA (adenine-N(6)-)-methyltransferase family.

The protein localises to the cytoplasm. It carries out the reaction adenosine(37) in tRNA1(Val) + S-adenosyl-L-methionine = N(6)-methyladenosine(37) in tRNA1(Val) + S-adenosyl-L-homocysteine + H(+). In terms of biological role, specifically methylates the adenine in position 37 of tRNA(1)(Val) (anticodon cmo5UAC). The polypeptide is tRNA1(Val) (adenine(37)-N6)-methyltransferase (Actinobacillus pleuropneumoniae serotype 5b (strain L20)).